The following is a 260-amino-acid chain: MPLKFTEVMEAEITKAIVETASEEWVEYAESDVIVVGAGPSGLTAARYLAEKGLKTLVLERRLSFGGGIGGGGMLFHKVVVEREAKDILDDFGIRYTEHRNFLVADSAEFMAKLAAKAIDAGAKIIHGVSVEDVIFRDDPLGVRGVCIQWSAVEISGLHVDPLFLRSRAVVDATGHDAEVISVAARKIPLEVSVVGERSAYSEVAEREIVEKTGKIVKGLYAAGMAVAAVHNLPRMGPIFGGMLLSGKKVAEIVAEDLKL.

Residues serine 41, 60–61 (ER), glycine 68, valine 131, and 159–161 (HVD) contribute to the NAD(+) site. Fe cation contacts are provided by aspartate 161 and histidine 176. Methionine 225 lines the NAD(+) pocket. Arginine 235 is a binding site for glycine.

It belongs to the THI4 family. As to quaternary structure, homooctamer; tetramer of dimers. The cofactor is Fe(2+).

It catalyses the reaction hydrogen sulfide + glycine + NAD(+) = ADP-5-ethyl-4-methylthiazole-2-carboxylate + nicotinamide + 3 H2O + H(+). Its pathway is cofactor biosynthesis; thiamine diphosphate biosynthesis. In terms of biological role, involved in the biosynthesis of the thiazole moiety of thiamine. Catalyzes the conversion of NAD and glycine to adenosine diphosphate 5-(2-hydroxyethyl)-4-methylthiazole-2-carboxylate (ADT), an adenylated thiazole intermediate, using free sulfide as a source of sulfur. The sequence is that of Thiamine thiazole synthase from Archaeoglobus fulgidus (strain ATCC 49558 / DSM 4304 / JCM 9628 / NBRC 100126 / VC-16).